A 115-amino-acid chain; its full sequence is Large ribosomal subunit protein bL19 (115 aa).

This sequence belongs to the bacterial ribosomal protein bL19 family.

In terms of biological role, this protein is located at the 30S-50S ribosomal subunit interface and may play a role in the structure and function of the aminoacyl-tRNA binding site. The sequence is that of Large ribosomal subunit protein bL19 from Pectobacterium atrosepticum (strain SCRI 1043 / ATCC BAA-672) (Erwinia carotovora subsp. atroseptica).